A 398-amino-acid chain; its full sequence is Acetate kinase (398 aa).

Asn9 provides a ligand contact to Mg(2+). Lys16 contributes to the ATP binding site. A substrate-binding site is contributed by Arg89. Residue Asp146 is the Proton donor/acceptor of the active site. ATP contacts are provided by residues 206–210 (HLGNG), 281–283 (DCR), and 329–333 (GIGEN). Residue Glu384 coordinates Mg(2+).

This sequence belongs to the acetokinase family. As to quaternary structure, homodimer. Requires Mg(2+) as cofactor. The cofactor is Mn(2+).

The protein localises to the cytoplasm. The catalysed reaction is acetate + ATP = acetyl phosphate + ADP. The protein operates within metabolic intermediate biosynthesis; acetyl-CoA biosynthesis; acetyl-CoA from acetate: step 1/2. Functionally, catalyzes the formation of acetyl phosphate from acetate and ATP. Can also catalyze the reverse reaction. This is Acetate kinase from Vibrio campbellii (strain ATCC BAA-1116).